The following is a 201-amino-acid chain: Recombination protein RecR (201 aa).

The segment at 60 to 75 (CKRCGSYAETEICEIC) adopts a C4-type zinc-finger fold. Residues 83-178 (HTFCVVEQPE…NVTRIAYGIT (96 aa)) enclose the Toprim domain.

This sequence belongs to the RecR family.

Functionally, may play a role in DNA repair. It seems to be involved in an RecBC-independent recombinational process of DNA repair. It may act with RecF and RecO. The sequence is that of Recombination protein RecR from Leptospira interrogans serogroup Icterohaemorrhagiae serovar copenhageni (strain Fiocruz L1-130).